Consider the following 403-residue polypeptide: MLHHVKLIYATKSRKLVGKKIVLAIPGSIAAVECVKLARELIRHGAEVHAVMSENATKIIHPYAMEFATGNPVVTEITGFIEHVELAGEHENKADLVLVCPATANTISKIACGIDDTPVTTVVTTAFAHTPIMIAPAMHSTMYDHPIVKENIEKLKKLGVEFIEPRFEEGKAKVASIEEIVYRVIRKLHPKSLEGKRVLVTAGATREYIDPIRYITNASSGKMGVAIAEEAEFRGAEVTLIRTKSSVPSFVENQIEVETVEEMLEAIESELKGKKYDVVVLAAAVSDFRVKNKADVKIKSGQPLVLELEPTPKIIDRVKELQPGVFLVGFKAETGLSEEELISAARKQIERAGSDLVVANTLKAFGSEENEVVLVGRDFAKKLPRMTKRELAERLWDEIEKML.

The interval 1–197 (MLHHVKLIYA…LHPKSLEGKR (197 aa)) is phosphopantothenoylcysteine decarboxylase. The interval 198 to 403 (VLVTAGATRE…RLWDEIEKML (206 aa)) is phosphopantothenate--cysteine ligase. Residues Asp287, Lys297, and Phe330 each contribute to the CTP site.

In the N-terminal section; belongs to the HFCD (homo-oligomeric flavin containing Cys decarboxylase) superfamily. It in the C-terminal section; belongs to the PPC synthetase family. It depends on Mg(2+) as a cofactor. FMN is required as a cofactor.

It catalyses the reaction N-[(R)-4-phosphopantothenoyl]-L-cysteine + H(+) = (R)-4'-phosphopantetheine + CO2. The enzyme catalyses (R)-4'-phosphopantothenate + L-cysteine + CTP = N-[(R)-4-phosphopantothenoyl]-L-cysteine + CMP + diphosphate + H(+). It functions in the pathway cofactor biosynthesis; coenzyme A biosynthesis. Catalyzes two sequential steps in the biosynthesis of coenzyme A. In the first step cysteine is conjugated to 4'-phosphopantothenate to form 4-phosphopantothenoylcysteine. In the second step the latter compound is decarboxylated to form 4'-phosphopantotheine. The chain is Coenzyme A biosynthesis bifunctional protein CoaBC from Thermococcus kodakarensis (strain ATCC BAA-918 / JCM 12380 / KOD1) (Pyrococcus kodakaraensis (strain KOD1)).